The sequence spans 4017 residues: Hybrid PKS-NRPS synthetase cghG (4017 aa).

The 433-residue stretch at 6–438 folds into the Ketosynthase family 3 (KS3) domain; sequence QEPIAVIGMA…GTNAHAIIES (433 aa). Residues cysteine 179, histidine 318, and histidine 358 each act as for beta-ketoacyl synthase activity in the active site. Residues 549–869 are malonyl-CoA:ACP transacylase (MAT) domain; it reads VFTGQGAQWP…GRNKNDVVEL (321 aa). The N-terminal hotdog fold stretch occupies residues 936 to 1072; that stretch reads NPILGRRCVE…ATLHVRFHEP (137 aa). Positions 936-1243 constitute a PKS/mFAS DH domain; that stretch reads NPILGRRCVE…VKPFAAATAR (308 aa). The tract at residues 937–1240 is dehydratase (DH) domain; that stretch reads PILGRRCVET…AVQVKPFAAA (304 aa). Catalysis depends on histidine 969, which acts as the Proton acceptor; for dehydratase activity. The interval 1087–1243 is C-terminal hotdog fold; it reads LVKTDPGRLY…VKPFAAATAR (157 aa). Aspartate 1147 (proton donor; for dehydratase activity) is an active-site residue. The interval 1398–1585 is methyltransferase (MT) domain; it reads VANVWIARMV…GVDTHCPVEK (188 aa). The tract at residues 2127–2300 is ketoreductase (KR)domain; it reads TYFLVGLSGE…XXXXXXXXXX (174 aa). The 77-residue stretch at 2423 to 2499 folds into the Carrier 1 domain; the sequence is AVVQDSLTEN…SLAEEAMAKI (77 aa). An O-(pantetheine 4'-phosphoryl)serine modification is found at serine 2458. Disordered regions lie at residues 2547–2606 and 2613–2632; these read VSEA…LQHR and WAGSASTTSPKPSRRAAQRH. Over residues 2548–2578 the composition is skewed to polar residues; the sequence is SEASGVSATTPSTRAETDASSSPALVSTPGT. The interval 2626-3020 is condensation; sequence RRAAQRHETL…GDAMETEKLQ (395 aa). The segment at 3053–3453 is adenylation; sequence EVIAQNPTAV…SGFLAIEGRI (401 aa). Positions 3567-3586 are disordered; it reads PKTTTASTTADGTQPAQPLT. Over residues 3569–3579 the composition is skewed to low complexity; the sequence is TTTASTTADGT. Positions 3583-3661 constitute a Carrier 2 domain; it reads QPLTPTESRL…SMAALLDQAG (79 aa). The interval 3588–3658 is thiolation; the sequence is TESRLATLWA…ELGSMAALLD (71 aa). The residue at position 3621 (serine 3621) is an O-(pantetheine 4'-phosphoryl)serine. A reductase-like region spans residues 3696–3920; sequence VTGASGSLGK…DVGRLEDVAA (225 aa).

The protein in the C-terminal section; belongs to the NRP synthetase family.

The enzyme catalyses (2S,4S)-4-hydroxy-4-methylglutamate + 8 malonyl-CoA + 3 S-adenosyl-L-methionine + ATP + 8 NADPH + 11 H(+) = (2S)-3-[(2S)-3,5-dioxo-4-[(2E,4R,6R,8E,10E,12E)-4,6,12-trimethyltetradeca-2,8,10,12-tetraenoyl]pyrrolidin-2-yl]-2-hydroxy-2-methylpropanoate + AMP + 3 S-adenosyl-L-homocysteine + 8 CO2 + diphosphate + 8 NADP(+) + 8 CoA + 6 H2O. It participates in secondary metabolite biosynthesis. Hybrid PKS-NRPS synthetase; part of the gene cluster that mediates the biosynthesis of the tetramic acid Sch210972, a potential anti-HIV fungal natural product that contains a decalin core. The PKS module of cghG together with the enoylreductase cghC catalyze the formation of the polyketide unit which is then conjugated to 4-hydroxyl-4-methyl glutamate (HMG) by the condensation domain of the cghG NRPS module. One unique structural feature of Sch210972 is the tetramic acid motif proposed to be derived from the non-proteinogenic amino acid HMG, by a Dieckmann-type condensation catalyzed by the reductase domain of cghG. The aldolase cghB catalyzes the aldol condensation of 2 molecules of pyruvic acid to yield the intermediate 4-hydroxyl-4-methyl-2-oxoglutarate (HMOG), which can then be stereoselectively transaminated by an unidentified enzyme to form HMG. The Diels-Alderase cghA then uses the Dieckmann product released by cghG as substrate and catalyzes the Diels-Alder cycloaddition to form the decalin ring of Sch210972. CghA also suppresses the nonenzymatic formation of the alternative stereoisomer. This Chaetomium globosum (strain ATCC 6205 / CBS 148.51 / DSM 1962 / NBRC 6347 / NRRL 1970) (Soil fungus) protein is Hybrid PKS-NRPS synthetase cghG.